Here is a 210-residue protein sequence, read N- to C-terminus: MASTNQKVVIIDTGCANVSSVRFAIERLGYTVTISKETSVVLNADKLFLPGVGTASEAMKNLQERDLVELVKQVDKPLLGICLGMQLLGALSEEQGQNGKELVPCLHLCDAPIKKLKTGNLPLPHMGWNTITPIDNHPLFQGIPAGSYFYFVHSYAMPVSTGVNDYTIAQCEYGQPFSAAIQSGNYYGVQFHPERSSKAGSQLIKNFLEM.

The region spanning 7–210 (KVVIIDTGCA…SQLIKNFLEM (204 aa)) is the Glutamine amidotransferase type-1 domain. Cys-82 serves as the catalytic Nucleophile. Catalysis depends on residues His-192 and Glu-194.

Heterodimer of HisH and HisF.

It localises to the cytoplasm. The catalysed reaction is 5-[(5-phospho-1-deoxy-D-ribulos-1-ylimino)methylamino]-1-(5-phospho-beta-D-ribosyl)imidazole-4-carboxamide + L-glutamine = D-erythro-1-(imidazol-4-yl)glycerol 3-phosphate + 5-amino-1-(5-phospho-beta-D-ribosyl)imidazole-4-carboxamide + L-glutamate + H(+). It carries out the reaction L-glutamine + H2O = L-glutamate + NH4(+). Its pathway is amino-acid biosynthesis; L-histidine biosynthesis; L-histidine from 5-phospho-alpha-D-ribose 1-diphosphate: step 5/9. In terms of biological role, IGPS catalyzes the conversion of PRFAR and glutamine to IGP, AICAR and glutamate. The HisH subunit catalyzes the hydrolysis of glutamine to glutamate and ammonia as part of the synthesis of IGP and AICAR. The resulting ammonia molecule is channeled to the active site of HisF. The chain is Imidazole glycerol phosphate synthase subunit HisH from Photobacterium profundum (strain SS9).